We begin with the raw amino-acid sequence, 276 residues long: Type II pantothenate kinase (276 aa).

8-15 contributes to the ATP binding site; it reads DAGGTLTK. Glutamate 76 functions as the Proton acceptor in the catalytic mechanism. ATP is bound by residues threonine 105, 127-131, phenylalanine 143, and serine 230; that span reads GGTIM.

Belongs to the type II pantothenate kinase family. As to quaternary structure, homodimer.

It localises to the cytoplasm. It carries out the reaction (R)-pantothenate + ATP = (R)-4'-phosphopantothenate + ADP + H(+). Its pathway is cofactor biosynthesis; coenzyme A biosynthesis; CoA from (R)-pantothenate: step 1/5. Catalyzes the phosphorylation of pantothenate (Pan), the first step in CoA biosynthesis. This is Type II pantothenate kinase from Bacillus cereus (strain ZK / E33L).